Here is a 466-residue protein sequence, read N- to C-terminus: ATP synthase subunit beta (466 aa).

Residue 153–160 (GGAGVGKT) coordinates ATP.

It belongs to the ATPase alpha/beta chains family. In terms of assembly, F-type ATPases have 2 components, CF(1) - the catalytic core - and CF(0) - the membrane proton channel. CF(1) has five subunits: alpha(3), beta(3), gamma(1), delta(1), epsilon(1). CF(0) has three main subunits: a(1), b(2) and c(9-12). The alpha and beta chains form an alternating ring which encloses part of the gamma chain. CF(1) is attached to CF(0) by a central stalk formed by the gamma and epsilon chains, while a peripheral stalk is formed by the delta and b chains.

It localises to the cell membrane. It catalyses the reaction ATP + H2O + 4 H(+)(in) = ADP + phosphate + 5 H(+)(out). Its function is as follows. Produces ATP from ADP in the presence of a proton gradient across the membrane. The catalytic sites are hosted primarily by the beta subunits. In Leuconostoc citreum (strain KM20), this protein is ATP synthase subunit beta.